The following is a 246-amino-acid chain: Osmotin-like protein TPM-1 (246 aa).

A signal peptide spans 1–21 (MAYLRSSFVFFLLAFVTYTYA). Cystine bridges form between C30/C225, C72/C82, C87/C93, C141/C213, C146/C196, C154/C164, C168/C177, and C178/C183.

It belongs to the thaumatin family.

Its subcellular location is the vacuole. The enzyme catalyses Endohydrolysis of (1-&gt;3)- or (1-&gt;4)-linkages in beta-D-glucans when the glucose residue whose reducing group is involved in the linkage to be hydrolyzed is itself substituted at C-3.. Its function is as follows. Antifungal protein that inhibits the growth of several phytopathogenic fungi (e.g. Trichothecium roseum, Fusarium oxysporum, Phytophthora citrophthora and Colletotrichum coccodes). May bind to beta-glucans and have beta-1,3-D-glucanase activity. This is Osmotin-like protein TPM-1 from Solanum lycopersicum (Tomato).